Consider the following 162-residue polypeptide: NADH-quinone oxidoreductase subunit I 2 (162 aa).

4Fe-4S ferredoxin-type domains are found at residues 53–83 and 93–122; these read LRRYPNGEERCIACKLCEAVCPALAITIDSE and TRYDIDLFKCIYCGFCEESCPVDSIVETRI. Positions 63, 66, 69, 73, 102, 105, 108, and 112 each coordinate [4Fe-4S] cluster.

It belongs to the complex I 23 kDa subunit family. NDH-1 is composed of 14 different subunits. Subunits NuoA, H, J, K, L, M, N constitute the membrane sector of the complex. [4Fe-4S] cluster serves as cofactor.

The protein resides in the cell inner membrane. The catalysed reaction is a quinone + NADH + 5 H(+)(in) = a quinol + NAD(+) + 4 H(+)(out). In terms of biological role, NDH-1 shuttles electrons from NADH, via FMN and iron-sulfur (Fe-S) centers, to quinones in the respiratory chain. The immediate electron acceptor for the enzyme in this species is believed to be ubiquinone. Couples the redox reaction to proton translocation (for every two electrons transferred, four hydrogen ions are translocated across the cytoplasmic membrane), and thus conserves the redox energy in a proton gradient. The sequence is that of NADH-quinone oxidoreductase subunit I 2 from Nitrosococcus oceani (strain ATCC 19707 / BCRC 17464 / JCM 30415 / NCIMB 11848 / C-107).